Here is a 457-residue protein sequence, read N- to C-terminus: tRNA-2-methylthio-N(6)-dimethylallyladenosine synthase (457 aa).

One can recognise an MTTase N-terminal domain in the interval 8-123 (KKVFIKTFGC…LPEMLARRDA (116 aa)). 6 residues coordinate [4Fe-4S] cluster: Cys17, Cys54, Cys86, Cys160, Cys164, and Cys167. The 234-residue stretch at 146–379 (RVDGATAFVS…QEAIEANGRR (234 aa)) folds into the Radical SAM core domain. In terms of domain architecture, TRAM spans 382-449 (QSRVGTVQRI…PHSLRGEVLL (68 aa)).

Belongs to the methylthiotransferase family. MiaB subfamily. As to quaternary structure, monomer. Requires [4Fe-4S] cluster as cofactor.

Its subcellular location is the cytoplasm. The enzyme catalyses N(6)-dimethylallyladenosine(37) in tRNA + (sulfur carrier)-SH + AH2 + 2 S-adenosyl-L-methionine = 2-methylsulfanyl-N(6)-dimethylallyladenosine(37) in tRNA + (sulfur carrier)-H + 5'-deoxyadenosine + L-methionine + A + S-adenosyl-L-homocysteine + 2 H(+). Catalyzes the methylthiolation of N6-(dimethylallyl)adenosine (i(6)A), leading to the formation of 2-methylthio-N6-(dimethylallyl)adenosine (ms(2)i(6)A) at position 37 in tRNAs that read codons beginning with uridine. The sequence is that of tRNA-2-methylthio-N(6)-dimethylallyladenosine synthase from Methylibium petroleiphilum (strain ATCC BAA-1232 / LMG 22953 / PM1).